Here is a 628-residue protein sequence, read N- to C-terminus: MAGENPKKEGVDARFAGIYSDPKFKNTKTKDHKIKLDSRFSKKDLEVQHKSKVDKYGRKIKNAQNNRELEDFDKYFEKEAENDEDSEVNAKTVVDRARGEVPDDYVSSSDEFTSSDSESSGESEVESEEENEVEIENAKPESGDISKNLAVVNLDWDHVKSEDLMITFSSFVPKGGKIERVAIYPSEFGKERMQREEVEGPPKELFQKKNKNKTSKKKKTDDSDSDMDIGIKDLYEEGDADKDVDSRALRQYQLDRLRYYYAIVYCSDTTTSKAIYDNCDGTEYESTANMFDLRYVPDGMTFDDDVRDECSILPKNYRPHQFSTDALQHSSVKLTWDETPADRVEVAKRAFTQKEIDDMDFKAYLASDSDESDGQVDEEAKNKLKSLVGDFGFNSKKETPNDEDEEVDMEITFTPALEGGNEKSSEDKEETTIEKIRRKEKERRKARKQKVKELKQQSEKDKKSKLKSVNKKHTNDEEEIEKNAKSKAELELLMDDDDDTETQGTINNKAHFNMNEILRSEKEKHKKGRYQKKERIVEDTFTPDLEDPRFKEVFEDHDFAIDPTQPEFKGTQAMSKILKERSKRVKNKKRKLGGSENNMTNNADDNEDIGNLVNKLKKKSKSSKKVKV.

Disordered stretches follow at residues 78–147 and 192–229; these read KEAE…DISK and RMQR…DMDI. Phosphoserine is present on Ser-86. Low complexity predominate over residues 104–118; sequence DYVSSSDEFTSSDSE. The segment covering 119-135 has biased composition (acidic residues); that stretch reads SSGESEVESEEENEVEI. Basic and acidic residues predominate over residues 192 to 207; that stretch reads RMQREEVEGPPKELFQ. Residues 208–218 show a composition bias toward basic residues; that stretch reads KKNKNKTSKKK. Thr-220 carries the post-translational modification Phosphothreonine. Ser-223, Ser-225, Ser-367, Ser-369, and Ser-372 each carry phosphoserine. Residues 412 to 541 form a disordered region; the sequence is TFTPALEGGN…KKERIVEDTF (130 aa). Positions 420–439 are enriched in basic and acidic residues; it reads GNEKSSEDKEETTIEKIRRK. A coiled-coil region spans residues 426 to 495; the sequence is EDKEETTIEK…SKAELELLMD (70 aa). Over residues 440–450 the composition is skewed to basic residues; that stretch reads EKERRKARKQK. The span at 451 to 462 shows a compositional bias: basic and acidic residues; sequence VKELKQQSEKDK. Residues 463-472 show a composition bias toward basic residues; the sequence is KSKLKSVNKK. Basic and acidic residues predominate over residues 481–490; that stretch reads EKNAKSKAEL. Residues 492 to 501 show a composition bias toward acidic residues; it reads LLMDDDDDTE. Thr-542 is subject to Phosphothreonine. 2 stretches are compositionally biased toward basic residues: residues 582-592 and 615-628; these read SKRVKNKKRKL and KLKK…KVKV. The segment at 582 to 628 is disordered; sequence SKRVKNKKRKLGGSENNMTNNADDNEDIGNLVNKLKKKSKSSKKVKV.

This sequence belongs to the ESF1 family. As to quaternary structure, interacts with KRR1, NOP1, NSR1, PUF6 and UTP22, proteins involved in 18S rRNA synthesis. Also interacts with ribosomal proteins RPS1, RPS3, RPS4, RPS6, RPS11, RPL2, RPL3, RPL4, RPL7, RPL10, RPL20 and RPP0 as well as with the snoRNAs U3 and U14.

It is found in the nucleus. The protein localises to the nucleolus. Its function is as follows. Involved in the 18S rRNA synthesis. Required for the early cleavages at sites A0, A1 and A2. The chain is Pre-rRNA-processing protein ESF1 (ESF1) from Saccharomyces cerevisiae (strain ATCC 204508 / S288c) (Baker's yeast).